A 485-amino-acid chain; its full sequence is MFS-type transporter phm3 (485 aa).

Positions 1–22 (MSLQDPTKEHNNTSPSPKDEKT) are disordered. 12 helical membrane passes run 55–75 (FTLY…LLVA), 83–103 (IVAS…PFLL), 113–133 (LWLY…CALS), 144–164 (FICG…IADL), 175–195 (ALFG…GGFV), 203–223 (WTFY…AVIM), 278–298 (PIVL…YLLF), 317–337 (GLAF…FAIL), 357–377 (LVLM…YGWS), 384–404 (WIVP…ILMP), 421–441 (ALAV…LAGP), and 449–469 (LGWG…VPFV).

This sequence belongs to the major facilitator superfamily.

The protein resides in the cell membrane. MFS-type transporter; part of the gene cluster that mediates the biosynthesis of the trans-fused decalin-containing tetramic acid phomasetin. This chain is MFS-type transporter phm3, found in Pyrenochaetopsis sp.